The following is a 447-amino-acid chain: Innexin-5 (447 aa).

The next 4 helical transmembrane spans lie at 30 to 47 (TSTL…SQYV), 108 to 128 (QWIP…SIIW), 198 to 218 (ALYL…FWIL), and 283 to 303 (VYVF…CSLA). The disordered stretch occupies residues 389 to 447 (KKDDDSALPASAPVDLQEDDDDDTPFPPPTKAVAETLTSDDEEEETDVDSPDTTATLPR). Residues 426–438 (TSDDEEEETDVDS) show a composition bias toward acidic residues.

It belongs to the pannexin family.

Its subcellular location is the cell membrane. The protein localises to the cell junction. It localises to the gap junction. In terms of biological role, structural component of the gap junctions. The polypeptide is Innexin-5 (inx-5) (Caenorhabditis elegans).